A 96-amino-acid polypeptide reads, in one-letter code: Aspartyl/glutamyl-tRNA(Asn/Gln) amidotransferase subunit C (96 aa).

The protein belongs to the GatC family. Heterotrimer of A, B and C subunits.

The catalysed reaction is L-glutamyl-tRNA(Gln) + L-glutamine + ATP + H2O = L-glutaminyl-tRNA(Gln) + L-glutamate + ADP + phosphate + H(+). The enzyme catalyses L-aspartyl-tRNA(Asn) + L-glutamine + ATP + H2O = L-asparaginyl-tRNA(Asn) + L-glutamate + ADP + phosphate + 2 H(+). Functionally, allows the formation of correctly charged Asn-tRNA(Asn) or Gln-tRNA(Gln) through the transamidation of misacylated Asp-tRNA(Asn) or Glu-tRNA(Gln) in organisms which lack either or both of asparaginyl-tRNA or glutaminyl-tRNA synthetases. The reaction takes place in the presence of glutamine and ATP through an activated phospho-Asp-tRNA(Asn) or phospho-Glu-tRNA(Gln). The sequence is that of Aspartyl/glutamyl-tRNA(Asn/Gln) amidotransferase subunit C from Sulfurovum sp. (strain NBC37-1).